Here is an 88-residue protein sequence, read N- to C-terminus: Small ribosomal subunit protein uS17 (88 aa).

It belongs to the universal ribosomal protein uS17 family. Part of the 30S ribosomal subunit.

Its function is as follows. One of the primary rRNA binding proteins, it binds specifically to the 5'-end of 16S ribosomal RNA. In Synechococcus sp. (strain CC9311), this protein is Small ribosomal subunit protein uS17.